Reading from the N-terminus, the 396-residue chain is S-adenosylmethionine synthase (396 aa).

Residue His14 coordinates ATP. Asp16 is a binding site for Mg(2+). Glu42 is a binding site for K(+). Positions 55 and 98 each coordinate L-methionine. The flexible loop stretch occupies residues 98–108 (QSPDIALGVNE). ATP contacts are provided by residues 174–176 (DGK), 241–242 (RF), Asp250, 256–257 (RK), Ala273, and Lys277. Position 250 (Asp250) interacts with L-methionine. Lys281 contributes to the L-methionine binding site.

This sequence belongs to the AdoMet synthase family. In terms of assembly, homotetramer; dimer of dimers. Mg(2+) serves as cofactor. It depends on K(+) as a cofactor.

Its subcellular location is the cytoplasm. The catalysed reaction is L-methionine + ATP + H2O = S-adenosyl-L-methionine + phosphate + diphosphate. It participates in amino-acid biosynthesis; S-adenosyl-L-methionine biosynthesis; S-adenosyl-L-methionine from L-methionine: step 1/1. Catalyzes the formation of S-adenosylmethionine (AdoMet) from methionine and ATP. The overall synthetic reaction is composed of two sequential steps, AdoMet formation and the subsequent tripolyphosphate hydrolysis which occurs prior to release of AdoMet from the enzyme. The chain is S-adenosylmethionine synthase from Fervidobacterium nodosum (strain ATCC 35602 / DSM 5306 / Rt17-B1).